The primary structure comprises 2026 residues: E3 ubiquitin-protein ligase TRIP12 (2026 aa).

3 stretches are compositionally biased toward polar residues: residues 1–10, 32–42, and 73–84; these read MSNRPNSNPG, GRNSLSLSVGS, and SSVSEPNITFSP. The disordered stretch occupies residues 1 to 437; it reads MSNRPNSNPG…SGESESDDSE (437 aa). Low complexity-rich tracts occupy residues 94–112, 135–161, 171–188, and 199–241; these read SSHF…AISP, AEPA…STPS, LLSS…SAAG, and AAKP…SSAA. Residues 359 to 371 are compositionally biased toward polar residues; that stretch reads QKTTGSCASTSRR. Residues 379-391 are compositionally biased toward basic and acidic residues; sequence GAAEARRQEKMAD. Residues 392-404 are compositionally biased toward polar residues; the sequence is SDNNQDGANSSAA. Over residues 412 to 430 the composition is skewed to low complexity; sequence GASASSSVAGAVGMTTSGE. The region spanning 789 to 876 is the WWE domain; the sequence is MLKKGSAQTT…DPELAKCFIK (88 aa). 2 disordered regions span residues 1008-1123 and 1441-1470; these read SNVT…SVSN and GCKD…KQDE. Basic residues predominate over residues 1040-1053; it reads KRKRLPKRGPRRPK. Positions 1056–1065 are enriched in basic and acidic residues; that stretch reads PPRDDDKVDN. The segment covering 1068-1079 has biased composition (low complexity); it reads KSPTTTQSPKSS. The segment covering 1094 to 1104 has biased composition (polar residues); sequence TQANSANSEPS. Residues 1530 to 1604 form a K-box region; the sequence is EIIPTGEFIN…AMQRLLDTNP (75 aa). Positions 1919–2026 constitute an HECT domain; the sequence is PDHGYTHDSR…REGQQSFHLS (108 aa). Cysteine 1993 (glycyl thioester intermediate) is an active-site residue.

Belongs to the UPL family. K-HECT subfamily.

The protein localises to the nucleus. It is found in the nucleoplasm. It catalyses the reaction S-ubiquitinyl-[E2 ubiquitin-conjugating enzyme]-L-cysteine + [acceptor protein]-L-lysine = [E2 ubiquitin-conjugating enzyme]-L-cysteine + N(6)-ubiquitinyl-[acceptor protein]-L-lysine.. Its pathway is protein modification; protein ubiquitination. Its function is as follows. E3 ubiquitin-protein ligase involved in ubiquitin fusion degradation (UFD) pathway and regulation of DNA repair. Part of the ubiquitin fusion degradation (UFD) pathway, a process that mediates ubiquitination of protein at their N-terminus, regardless of the presence of lysine residues in target proteins. Acts as a key regulator of DNA damage response by acting as a suppressor of RNF168, an E3 ubiquitin-protein ligase that promotes accumulation of 'Lys-63'-linked histone H2A and H2AX at DNA damage sites, thereby acting as a guard against excessive spreading of ubiquitinated chromatin at damaged chromosomes. In Danio rerio (Zebrafish), this protein is E3 ubiquitin-protein ligase TRIP12 (trip12).